A 147-amino-acid chain; its full sequence is Cyanate hydratase (147 aa).

Residues R88, E91, and S114 contribute to the active site.

The protein belongs to the cyanase family.

The enzyme catalyses cyanate + hydrogencarbonate + 3 H(+) = NH4(+) + 2 CO2. Its function is as follows. Catalyzes the reaction of cyanate with bicarbonate to produce ammonia and carbon dioxide. In Dechloromonas aromatica (strain RCB), this protein is Cyanate hydratase.